The following is a 415-amino-acid chain: DNA primase DnaG (415 aa).

One can recognise a Toprim domain in the interval 171–250 (DAIIIVEGRA…AFSPRGKSVE (80 aa)). Residues Glu-177, Asp-219, and Asp-221 each coordinate Mg(2+). The tract at residues 280-323 (ELPGDLGGRPARTAPAHDEGGNSDTTGKQAVSQKRIRDGTSKVP) is disordered. The segment covering 301-311 (NSDTTGKQAVS) has biased composition (polar residues).

It belongs to the archaeal DnaG primase family. As to quaternary structure, forms a ternary complex with MCM helicase and DNA. It depends on Mg(2+) as a cofactor.

It catalyses the reaction ssDNA + n NTP = ssDNA/pppN(pN)n-1 hybrid + (n-1) diphosphate.. Its function is as follows. RNA polymerase that catalyzes the synthesis of short RNA molecules used as primers for DNA polymerase during DNA replication. The polypeptide is DNA primase DnaG (Methanoregula boonei (strain DSM 21154 / JCM 14090 / 6A8)).